The primary structure comprises 118 residues: Large ribosomal subunit protein uL18 (118 aa).

This sequence belongs to the universal ribosomal protein uL18 family. Part of the 50S ribosomal subunit; part of the 5S rRNA/L5/L18/L25 subcomplex. Contacts the 5S and 23S rRNAs.

This is one of the proteins that bind and probably mediate the attachment of the 5S RNA into the large ribosomal subunit, where it forms part of the central protuberance. This Helicobacter pylori (strain J99 / ATCC 700824) (Campylobacter pylori J99) protein is Large ribosomal subunit protein uL18.